A 261-amino-acid polypeptide reads, in one-letter code: 5'-nucleotidase SurE (261 aa).

4 residues coordinate a divalent metal cation: Asp-8, Asp-9, Ser-39, and Asn-94.

It belongs to the SurE nucleotidase family. A divalent metal cation is required as a cofactor.

Its subcellular location is the cytoplasm. The catalysed reaction is a ribonucleoside 5'-phosphate + H2O = a ribonucleoside + phosphate. Nucleotidase that shows phosphatase activity on nucleoside 5'-monophosphates. This chain is 5'-nucleotidase SurE, found in Archaeoglobus fulgidus (strain ATCC 49558 / DSM 4304 / JCM 9628 / NBRC 100126 / VC-16).